Here is a 265-residue protein sequence, read N- to C-terminus: Apolipoprotein A-I (265 aa).

The N-terminal stretch at 1–18 is a signal peptide; that stretch reads MKAVVLAVAALFLAGGEA. 2 consecutive repeat copies span residues 68 to 89 and 90 to 111. Residues 68-265 form a 10 X approximate tandem repeats region; that stretch reads LKLTENLDTL…EEASKKLSSQ (198 aa). Met110 carries the post-translational modification Methionine sulfoxide. The 3; half-length repeat unit spans residues 112-122; sequence KDLADMKQKVQ. Tandem repeats lie at residues 123-144, 145-166, and 167-188. The stretch at 189–208 is one 7; truncated repeat; the sequence is PYSEQMRERLAERLAALRDS. Met194 is subject to Methionine sulfoxide. Residues 209-230 form repeat 8; that stretch reads PSLAEYQAKAHEHLKTLHEKAQ. The 9; half-length repeat unit spans residues 231–241; the sequence is PALSDLGQGVL. Repeat 10 spans residues 242 to 265; sequence PVLESLKATLVGAIEEASKKLSSQ.

This sequence belongs to the apolipoprotein A1/A4/E family. In terms of assembly, homodimer. Interacts with APOA1BP and CLU. Component of a sperm activating protein complex (SPAP), consisting of APOA1, an immunoglobulin heavy chain, an immunoglobulin light chain and albumin. Interacts with NDRG1. Interacts with SCGB3A2. Interacts with NAXE and YJEFN3. Post-translationally, glycosylated. In terms of processing, palmitoylated. Phosphorylation sites are present in the extracellular medium.

The protein resides in the secreted. Its function is as follows. Participates in the reverse transport of cholesterol from tissues to the liver for excretion by promoting cholesterol efflux from tissues and by acting as a cofactor for the lecithin cholesterol acyltransferase (LCAT). As part of the SPAP complex, activates spermatozoa motility. In Dipodomys ordii (Ord's kangaroo rat), this protein is Apolipoprotein A-I (Apoa1).